A 102-amino-acid chain; its full sequence is NADH-quinone oxidoreductase subunit K (102 aa).

3 consecutive transmembrane segments (helical) span residues 5–25 (LAHY…GIFL), 31–51 (IILL…FVAF), and 62–82 (VFVF…LAIL).

It belongs to the complex I subunit 4L family. In terms of assembly, NDH-1 is composed of 14 different subunits. Subunits NuoA, H, J, K, L, M, N constitute the membrane sector of the complex.

It localises to the cell inner membrane. The enzyme catalyses a quinone + NADH + 5 H(+)(in) = a quinol + NAD(+) + 4 H(+)(out). In terms of biological role, NDH-1 shuttles electrons from NADH, via FMN and iron-sulfur (Fe-S) centers, to quinones in the respiratory chain. The immediate electron acceptor for the enzyme in this species is believed to be ubiquinone. Couples the redox reaction to proton translocation (for every two electrons transferred, four hydrogen ions are translocated across the cytoplasmic membrane), and thus conserves the redox energy in a proton gradient. This chain is NADH-quinone oxidoreductase subunit K, found in Bordetella avium (strain 197N).